The following is a 164-amino-acid chain: Large ribosomal subunit protein bL9 (164 aa).

The protein belongs to the bacterial ribosomal protein bL9 family.

Functionally, binds to the 23S rRNA. The polypeptide is Large ribosomal subunit protein bL9 (Borrelia duttonii (strain Ly)).